A 355-amino-acid chain; its full sequence is Uroporphyrinogen decarboxylase (355 aa).

Substrate is bound by residues 27–31 (RQAGR), F46, D77, Y154, T209, and H328.

It belongs to the uroporphyrinogen decarboxylase family. In terms of assembly, homodimer.

It is found in the cytoplasm. It catalyses the reaction uroporphyrinogen III + 4 H(+) = coproporphyrinogen III + 4 CO2. The protein operates within porphyrin-containing compound metabolism; protoporphyrin-IX biosynthesis; coproporphyrinogen-III from 5-aminolevulinate: step 4/4. In terms of biological role, catalyzes the decarboxylation of four acetate groups of uroporphyrinogen-III to yield coproporphyrinogen-III. In Vibrio vulnificus (strain CMCP6), this protein is Uroporphyrinogen decarboxylase.